Consider the following 261-residue polypeptide: CD40 ligand (261 aa).

At 1–22 (MVETYHQPAPRSAATGLPVSMK) the chain is on the cytoplasmic side. The helical; Signal-anchor for type II membrane protein transmembrane segment at 23–43 (IFMYLLTVFLITQMIGSALFA) threads the bilayer. Topologically, residues 44–261 (VYLHRRLDKI…GFTSFGLLKL (218 aa)) are extracellular. Residues 122 to 261 (IAAHVISEAS…GFTSFGLLKL (140 aa)) form the THD domain. An intrachain disulfide couples cysteine 178 to cysteine 218. Asparagine 240 carries an N-linked (GlcNAc...) asparagine glycan.

It belongs to the tumor necrosis factor family. As to quaternary structure, homotrimer. Interacts with CD28. CD40 ligand, soluble form: Exists as either a monomer or a homotrimer. Forms a ternary complex between CD40 and integrins for CD40-CD40LG signaling. The soluble form derives from the membrane form by proteolytic processing.

Its subcellular location is the cell membrane. The protein resides in the cell surface. It is found in the secreted. Its function is as follows. Cytokine that acts as a ligand to CD40/TNFRSF5. Costimulates T-cell proliferation and cytokine production. Its cross-linking on T-cells generates a costimulatory signal which enhances the production of IL4 and IL10 in conjunction with the TCR/CD3 ligation and CD28 costimulation. Induces the activation of NF-kappa-B. Induces the activation of kinases MAPK8 and PAK2 in T-cells. Mediates B-cell proliferation in the absence of co-stimulus as well as IgE production in the presence of IL4. Involved in immunoglobulin class switching. In terms of biological role, acts as a ligand for integrins, specifically ITGA5:ITGB1 and ITGAV:ITGB3; both integrins and the CD40 receptor are required for activation of CD40-CD40LG signaling, which have cell-type dependent effects, such as B-cell activation, NF-kappa-B signaling and anti-apoptotic signaling. This Aotus trivirgatus (Three-striped night monkey) protein is CD40 ligand (CD40LG).